Here is a 451-residue protein sequence, read N- to C-terminus: Proline--tRNA ligase (451 aa).

This sequence belongs to the class-II aminoacyl-tRNA synthetase family. ProS type 2 subfamily. As to quaternary structure, homodimer.

It is found in the cytoplasm. The catalysed reaction is tRNA(Pro) + L-proline + ATP = L-prolyl-tRNA(Pro) + AMP + diphosphate. Its function is as follows. Catalyzes the attachment of proline to tRNA(Pro) in a two-step reaction: proline is first activated by ATP to form Pro-AMP and then transferred to the acceptor end of tRNA(Pro). The chain is Proline--tRNA ligase from Ruegeria sp. (strain TM1040) (Silicibacter sp.).